We begin with the raw amino-acid sequence, 266 residues long: MILLVDAGNTNIVLGVHNGERYIASWRISSEGNKTSDEYGIQVMQLFNLSDIDPKNITGVIVSSVVPNIMHSLENMLRKCFCHEPIIVGPGVKTGINIKYDNPREVGADRIVNAVAAYEIYKRPVIIIDFGTATTFCAVRANGDYLGGCICPGIRISADALFERAAKLPRVELEVPKNMICKNTVSSMQSGIIFGYIGQVEYIVKKMKQEMKNSKYKEEPFVLATGGLANLIAKETDVIDKVDSDLTLEGLKILYEKNKEIEISQR.

6-13 contributes to the ATP binding site; it reads DAGNTNIV. Substrate is bound by residues Tyr-100 and 107–110; that span reads GADR. The Proton acceptor role is filled by Asp-109. Asp-129 lines the K(+) pocket. Thr-132 lines the ATP pocket. Thr-184 lines the substrate pocket.

Belongs to the type III pantothenate kinase family. As to quaternary structure, homodimer. The cofactor is NH4(+). K(+) serves as cofactor.

It is found in the cytoplasm. It catalyses the reaction (R)-pantothenate + ATP = (R)-4'-phosphopantothenate + ADP + H(+). The protein operates within cofactor biosynthesis; coenzyme A biosynthesis; CoA from (R)-pantothenate: step 1/5. Functionally, catalyzes the phosphorylation of pantothenate (Pan), the first step in CoA biosynthesis. This Clostridium beijerinckii (strain ATCC 51743 / NCIMB 8052) (Clostridium acetobutylicum) protein is Type III pantothenate kinase.